The chain runs to 293 residues: Phosphatidylcholine-sterol acyltransferase (293 aa).

An N-linked (GlcNAc...) asparagine glycan is attached at Asn-26. Ser-123 (nucleophile) is an active-site residue. N-linked (GlcNAc...) asparagine glycosylation occurs at Asn-179. Cys-220 and Cys-263 form a disulfide bridge. The active-site Charge relay system is the Asp-252. An N-linked (GlcNAc...) asparagine glycan is attached at Asn-280. His-284 serves as the catalytic Charge relay system.

The protein belongs to the AB hydrolase superfamily. Lipase family.

It is found in the secreted. The enzyme catalyses a sterol + a 1,2-diacyl-sn-glycero-3-phosphocholine = a sterol ester + a 1-acyl-sn-glycero-3-phosphocholine. APOA1 is the most potent activator in plasma. Also activated by APOE, APOC1 and APOA4. In terms of biological role, central enzyme in the extracellular metabolism of plasma lipoproteins. Synthesized mainly in the liver and secreted into plasma where it converts cholesterol and phosphatidylcholines (lecithins) to cholesteryl esters and lysophosphatidylcholines on the surface of high and low density lipoproteins (HDLs and LDLs). The cholesterol ester is then transported back to the liver. Has a preference for plasma 16:0-18:2 or 18:O-18:2 phosphatidylcholines. Also produced in the brain by primary astrocytes, and esterifies free cholesterol on nascent APOE-containing lipoproteins secreted from glia and influences cerebral spinal fluid (CSF) APOE- and APOA1 levels. Together with APOE and the cholesterol transporter ABCA1, plays a key role in the maturation of glial-derived, nascent lipoproteins. Required for remodeling high-density lipoprotein particles into their spherical forms. This chain is Phosphatidylcholine-sterol acyltransferase (LCAT), found in Gerbilliscus gambianus (Gambian gerbil).